A 355-amino-acid polypeptide reads, in one-letter code: Molybdenum import ATP-binding protein ModC (355 aa).

The ABC transporter domain occupies 1–233 (MTLIVEAKQR…PSAAADRKEA (233 aa)). 31–38 (GRSGSGKT) is a binding site for ATP. The Mop domain maps to 291 to 355 (GLSALNILEG…AIIKTVALEG (65 aa)).

This sequence belongs to the ABC transporter superfamily. Molybdate importer (TC 3.A.1.8) family. As to quaternary structure, the complex is composed of two ATP-binding proteins (ModC), two transmembrane proteins (ModB) and a solute-binding protein (ModA).

It is found in the cell inner membrane. It carries out the reaction molybdate(out) + ATP + H2O = molybdate(in) + ADP + phosphate + H(+). In terms of biological role, part of the ABC transporter complex ModABC involved in molybdenum import. Responsible for energy coupling to the transport system. In Rhizobium etli (strain ATCC 51251 / DSM 11541 / JCM 21823 / NBRC 15573 / CFN 42), this protein is Molybdenum import ATP-binding protein ModC.